The chain runs to 227 residues: dTTP/UTP pyrophosphatase (227 aa).

The segment at 1-21 (MNDLPRAELPGSGSPNPESLI) is disordered. The active-site Proton acceptor is the Asp-87.

It belongs to the Maf family. YhdE subfamily. A divalent metal cation serves as cofactor.

The protein localises to the cytoplasm. The catalysed reaction is dTTP + H2O = dTMP + diphosphate + H(+). It carries out the reaction UTP + H2O = UMP + diphosphate + H(+). In terms of biological role, nucleoside triphosphate pyrophosphatase that hydrolyzes dTTP and UTP. May have a dual role in cell division arrest and in preventing the incorporation of modified nucleotides into cellular nucleic acids. The sequence is that of dTTP/UTP pyrophosphatase from Rhodopirellula baltica (strain DSM 10527 / NCIMB 13988 / SH1).